Here is a 492-residue protein sequence, read N- to C-terminus: Solute carrier family 2, facilitated glucose transporter member 1 (492 aa).

The residue at position 1 (methionine 1) is an N-acetylmethionine. Topologically, residues 1-11 (MEPSSKKVTGR) are cytoplasmic. The helical transmembrane segment at 12-33 (LMLAVGGAVLGSLQFGYNTGVI) threads the bilayer. Over 34–66 (NAPQKVIEEFYNQTWIHRYGERILPTTLTTLWS) the chain is Extracellular. Asparagine 45 carries N-linked (GlcNAc...) asparagine glycosylation. A helical membrane pass occupies residues 67-87 (LSVAIFSVGGMIGSFSVGLFV). Over 88–90 (NRF) the chain is Cytoplasmic. The helical transmembrane segment at 91-112 (GRRNSMLMMNLLAFVSAVLMGF) threads the bilayer. The Extracellular portion of the chain corresponds to 113–120 (SKLAKSFE). The helical transmembrane segment at 121–144 (MLILGRFIIGVYCGLTTGFVPMYV) threads the bilayer. Residues 145–155 (GEVSPTALRGA) lie on the Cytoplasmic side of the membrane. The chain crosses the membrane as a helical span at residues 156 to 176 (LGTLHQLGIVVGILIAQVFGL). Glutamine 161 provides a ligand contact to D-glucose. Topologically, residues 177–185 (DSIMGNEDL) are extracellular. A helical membrane pass occupies residues 186–206 (WPLLLSVIFVPALLQCIVLPL). The Cytoplasmic segment spans residues 207 to 271 (CPESPRFLLI…LFRSPAYRQP (65 aa)). Serine 226 bears the Phosphoserine mark. A helical membrane pass occupies residues 272 to 293 (ILSAVVLQLSQQLSGINAVFYY). D-glucose-binding positions include 282–283 (QQ) and asparagine 288. Residues 294-306 (STSIFEKAGVQQP) lie on the Extracellular side of the membrane. A helical membrane pass occupies residues 307–328 (VYATIGSGIVNTAFTVVSLFVV). Residue asparagine 317 coordinates D-glucose. Residues 329-334 (ERAGRR) lie on the Cytoplasmic side of the membrane. A helical membrane pass occupies residues 335-355 (TLHLIGLAGMAACAVLMTIAL). The Extracellular segment spans residues 356 to 365 (ALLEQLPWMS). Residues 366–388 (YLSIVAIFGFVAFFEVGPGPIPW) form a helical membrane-spanning segment. D-glucose-binding residues include glutamate 380 and tryptophan 388. At 389–401 (FIVAELFSQGPRP) the chain is on the cytoplasmic side. A helical transmembrane segment spans residues 402–422 (AAVAVAGFSNWTSNFIVGMCF). Topologically, residues 423 to 429 (QYVEQLC) are extracellular. A helical transmembrane segment spans residues 430-450 (GPYVFIIFTVLLVLFFIFTYF). At 451 to 492 (KVPETKGRTFDEIASGFRQGGASQSDKTPEELFHPLGADSQV) the chain is on the cytoplasmic side. Serine 465 is subject to Phosphoserine. Residues 468 to 492 (RQGGASQSDKTPEELFHPLGADSQV) are disordered. Position 478 is a phosphothreonine (threonine 478). A Phosphoserine modification is found at serine 490.

It belongs to the major facilitator superfamily. Sugar transporter (TC 2.A.1.1) family. Glucose transporter subfamily. Found in a complex with ADD2, DMTN and SLC2A1. Interacts (via C-terminus cytoplasmic region) with DMTN. Interacts with SNX27; the interaction is required when endocytosed to prevent degradation in lysosomes and promote recycling to the plasma membrane. Interacts with GIPC (via PDZ domain). Interacts with STOM. Interacts with SGTA (via Gln-rich region). Interacts with BSG. Interacts with SMIM43; the interaction may promote SLC2A1-mediated glucose transport to meet the energy needs of mesendoderm differentiation. Post-translationally, phosphorylation at Ser-226 by PKC promotes glucose uptake by increasing cell membrane localization.

It localises to the cell membrane. It is found in the photoreceptor inner segment. The catalysed reaction is D-glucose(out) = D-glucose(in). Its activity is regulated as follows. The uptake of glucose is inhibited by cytochalasin B. Glucose uptake is increased in response to phorbol ester 12-O-tetradecanoylphorbol-13-acetate (TPA) treatment: TPA-induced glucose uptake requires phosphorylation at Ser-226. In terms of biological role, facilitative glucose transporter, which is responsible for constitutive or basal glucose uptake. Has a very broad substrate specificity; can transport a wide range of aldoses including both pentoses and hexoses. Most important energy carrier of the brain: present at the blood-brain barrier and assures the energy-independent, facilitative transport of glucose into the brain. In association with BSG and NXNL1, promotes retinal cone survival by increasing glucose uptake into photoreceptors. Required for mesendoderm differentiation. The sequence is that of Solute carrier family 2, facilitated glucose transporter member 1 from Oryctolagus cuniculus (Rabbit).